Reading from the N-terminus, the 164-residue chain is Biotin carboxyl carrier protein of acetyl-CoA carboxylase (164 aa).

The 77-residue stretch at 86-162 (GDFIVSPLVG…QFGSKLFRIV (77 aa)) folds into the Biotinyl-binding domain. Lys128 carries the post-translational modification N6-biotinyllysine.

As to quaternary structure, homodimer.

It participates in lipid metabolism; fatty acid biosynthesis. In terms of biological role, this protein is a component of the acetyl coenzyme A carboxylase complex; first, biotin carboxylase catalyzes the carboxylation of the carrier protein and then the transcarboxylase transfers the carboxyl group to form malonyl-CoA. This is Biotin carboxyl carrier protein of acetyl-CoA carboxylase (accB) from Chlamydia trachomatis serovar D (strain ATCC VR-885 / DSM 19411 / UW-3/Cx).